Here is a 191-residue protein sequence, read N- to C-terminus: Bcl-2-like protein 10 (191 aa).

A BH1 motif is present at residues L79–G98. A Glycyl lysine isopeptide (Lys-Gly) (interchain with G-Cter in ubiquitin) cross-link involves residue K112. A BH2 motif is present at residues R144 to C155. The chain crosses the membrane as a helical span at residues F166–A183.

The protein belongs to the Bcl-2 family. As to quaternary structure, interacts with BAX. Interacts with BCL2 and BCL2L1/BCLX. Interacts with APAF1. Interacts with ITPR1, ITPR2 and ITPR3; the interaction with ITPR1 is increased in the presence of AHCLY1. Interacts with AHCYL1. Interacts with HIP1R (via ENTH and I/LWEQ domains). Interacts with CASP9. Interacts with BCL2L11/BIM. Interacts with BIK. Interacts with UBQLN4. Interacts with NME2/NM23-H2. Interacts with PMAIP1/NOXA. Interacts with TPX2. Interacts with UBQLN1; in the cytoplasm. Interacts (via BH1 domain) with BECN1. Ca(2+) serves as cofactor. Post-translationally, monoubiquitinated by UBQLN1; results in stabilization of BCL2L10 protein abundance and in relocalization from mitochondria to cytoplasm. As to expression, expressed in multiple embryonic tissues. Restricted to the ovary and testis in adult mice.

The protein localises to the mitochondrion. The protein resides in the nucleus membrane. It localises to the endoplasmic reticulum. Its subcellular location is the cytoplasm. It is found in the cytoskeleton. The protein localises to the spindle. Functionally, promotes cell survival by suppressing apoptosis induced by BAX but not BAK. Increases binding of AHCYL1/IRBIT to ITPR1. Reduces ITPR1-mediated calcium release from the endoplasmic reticulum cooperatively with AHCYL1/IRBIT under normal cellular conditions. Under apoptotic stress conditions, dissociates from ITPR1 and is displaced from mitochondria-associated endoplasmic reticulum membranes, leading to increased Ca(2+) transfer to mitochondria which promotes apoptosis. Required for the correct formation of the microtubule organizing center during oocyte cell division, potentially via regulation of protein abundance and localization of other microtubule organizing center components such as AURKA and TPX2. The protein is Bcl-2-like protein 10 of Mus musculus (Mouse).